Here is a 319-residue protein sequence, read N- to C-terminus: Quinolinate synthase (319 aa).

2 residues coordinate iminosuccinate: H34 and S51. [4Fe-4S] cluster is bound at residue C96. Iminosuccinate-binding positions include 122–124 (YIN) and S139. C182 is a [4Fe-4S] cluster binding site. Iminosuccinate-binding positions include 208 to 210 (HPE) and T225. C276 contacts [4Fe-4S] cluster.

The protein belongs to the quinolinate synthase family. Type 2 subfamily. Requires [4Fe-4S] cluster as cofactor.

The protein localises to the cytoplasm. It carries out the reaction iminosuccinate + dihydroxyacetone phosphate = quinolinate + phosphate + 2 H2O + H(+). Its pathway is cofactor biosynthesis; NAD(+) biosynthesis; quinolinate from iminoaspartate: step 1/1. Functionally, catalyzes the condensation of iminoaspartate with dihydroxyacetone phosphate to form quinolinate. This Thermosynechococcus vestitus (strain NIES-2133 / IAM M-273 / BP-1) protein is Quinolinate synthase.